The following is a 148-amino-acid chain: Ribonuclease pancreatic (148 aa).

Residues 1-25 (MGLEKSLILLPLLVLVFGWVQPSLG) form the signal peptide. Substrate-binding residues include Lys32 and Arg35. The Proton acceptor role is filled by His37. Cystine bridges form between Cys50–Cys108, Cys64–Cys119, Cys82–Cys134, and Cys89–Cys96. N-linked (GlcNAc...) asparagine glycosylation is present at Asn58. 65–69 (KPVNT) is a binding site for substrate. N-linked (GlcNAc...) asparagine glycosylation is present at Asn86. 2 residues coordinate substrate: Lys90 and Arg109. Residue His143 is the Proton donor of the active site.

Belongs to the pancreatic ribonuclease family. Monomer. Interacts with and forms tight 1:1 complexes with RNH1. Dimerization of two such complexes may occur. Interaction with RNH1 inhibits this protein. Pancreas.

Its subcellular location is the secreted. It carries out the reaction an [RNA] containing cytidine + H2O = an [RNA]-3'-cytidine-3'-phosphate + a 5'-hydroxy-ribonucleotide-3'-[RNA].. It catalyses the reaction an [RNA] containing uridine + H2O = an [RNA]-3'-uridine-3'-phosphate + a 5'-hydroxy-ribonucleotide-3'-[RNA].. Its function is as follows. Endonuclease that catalyzes the cleavage of RNA on the 3' side of pyrimidine nucleotides. Acts on single-stranded and double-stranded RNA. The protein is Ribonuclease pancreatic (RNASE1) of Myodes glareolus (Bank vole).